The sequence spans 262 residues: GTP cyclohydrolase 1 type 2 homolog (262 aa).

A divalent metal cation-binding residues include His65, Asp102, His222, and Glu225.

This sequence belongs to the GTP cyclohydrolase I type 2/NIF3 family. As to quaternary structure, homohexamer.

This is GTP cyclohydrolase 1 type 2 homolog from Streptococcus pyogenes serotype M6 (strain ATCC BAA-946 / MGAS10394).